We begin with the raw amino-acid sequence, 436 residues long: AP-2 complex subunit mu-B (436 aa).

Residues 170–435 form the MHD domain; that stretch reads RNELFLDVLE…IGRSGIYETR (266 aa). K342, K346, and K355 together coordinate a 1,2-diacyl-sn-glycero-3-phospho-(1D-myo-inositol-3,4,5-trisphosphate).

It belongs to the adaptor complexes medium subunit family. Adaptor protein complex 2 (AP-2) is a heterotetramer composed of two large adaptins (alpha-type subunit and beta-type subunit), a medium adaptin (mu-type subunit) and a small adaptin (sigma-type subunit).

Its subcellular location is the cell membrane. It is found in the membrane. The protein localises to the coated pit. Functionally, component of the adaptor complexes which link clathrin to receptors in coated vesicles. Clathrin-associated protein complexes are believed to interact with the cytoplasmic tails of membrane proteins, leading to their selection and concentration. AP50 is a subunit of the plasma membrane adaptor. The complex binds polyphosphoinositide-containing lipids. In Danio rerio (Zebrafish), this protein is AP-2 complex subunit mu-B (ap2m1b).